Reading from the N-terminus, the 385-residue chain is Cytochrome b (385 aa).

4 helical membrane passes run 34 to 54 (FGSL…LLTM), 78 to 99 (WFIR…FIHI), 114 to 134 (WYSG…GYVL), and 179 to 199 (FLVL…IHLV). Heme b-binding residues include His84 and His98. Residues His183 and His197 each contribute to the heme b site. His202 lines the a ubiquinone pocket. A run of 4 helical transmembrane segments spans residues 227–247 (FKDI…SLLL), 289–309 (LAGI…PILI), 321–341 (LMQV…WLGA), and 348–368 (FILM…VMFP).

The protein belongs to the cytochrome b family. In terms of assembly, the cytochrome bc1 complex contains 3 respiratory subunits (MT-CYB, CYC1 and UQCRFS1), 2 core proteins (UQCRC1 and UQCRC2) and probably 6 low-molecular weight proteins. Heme b serves as cofactor.

It localises to the mitochondrion inner membrane. Its function is as follows. Component of the ubiquinol-cytochrome c reductase complex (complex III or cytochrome b-c1 complex) that is part of the mitochondrial respiratory chain. The b-c1 complex mediates electron transfer from ubiquinol to cytochrome c. Contributes to the generation of a proton gradient across the mitochondrial membrane that is then used for ATP synthesis. This chain is Cytochrome b (MT-CYB), found in Eptatretus burgeri (Inshore hagfish).